The following is a 208-amino-acid chain: Calcyphosin-like protein (208 aa).

4 EF-hand domains span residues 39–74 (AGIKGLGRVFRIMDDNNNRTLDFKEFLKGLNDYAVV), 75–110 (MEKEEAEELFQRFDRDGSGTIDFNEFLLTLRPPMSR), 111–146 (ARKEVIMKAFRKLDKTGDGVITIEDLREVYNAKHHP), and 154–191 (TEEQVFRKFLDNFDSPYDKDGLVTPEEFMNYYAGVSAS). Ca(2+) is bound by residues Asp52, Asn54, Asn56, Thr58, Glu63, Asp88, Asp90, Ser92, Thr94, and Glu99.

The protein localises to the cytoplasm. In Mus musculus (Mouse), this protein is Calcyphosin-like protein (Capsl).